Here is a 96-residue protein sequence, read N- to C-terminus: Co-chaperonin GroES 2 (96 aa).

It belongs to the GroES chaperonin family. As to quaternary structure, heptamer of 7 subunits arranged in a ring. Interacts with the chaperonin GroEL.

The protein resides in the cytoplasm. Functionally, together with the chaperonin GroEL, plays an essential role in assisting protein folding. The GroEL-GroES system forms a nano-cage that allows encapsulation of the non-native substrate proteins and provides a physical environment optimized to promote and accelerate protein folding. GroES binds to the apical surface of the GroEL ring, thereby capping the opening of the GroEL channel. The sequence is that of Co-chaperonin GroES 2 from Vibrio parahaemolyticus serotype O3:K6 (strain RIMD 2210633).